A 184-amino-acid chain; its full sequence is Peptide deformylase (184 aa).

Residues Cys-98 and His-140 each contribute to the Fe cation site. Glu-141 is a catalytic residue. His-144 lines the Fe cation pocket.

Belongs to the polypeptide deformylase family. Fe(2+) serves as cofactor.

It carries out the reaction N-terminal N-formyl-L-methionyl-[peptide] + H2O = N-terminal L-methionyl-[peptide] + formate. Its function is as follows. Removes the formyl group from the N-terminal Met of newly synthesized proteins. Requires at least a dipeptide for an efficient rate of reaction. N-terminal L-methionine is a prerequisite for activity but the enzyme has broad specificity at other positions. This is Peptide deformylase from Phocaeicola vulgatus (strain ATCC 8482 / DSM 1447 / JCM 5826 / CCUG 4940 / NBRC 14291 / NCTC 11154) (Bacteroides vulgatus).